Consider the following 446-residue polypeptide: tRNA-2-methylthio-N(6)-dimethylallyladenosine synthase (446 aa).

The MTTase N-terminal domain occupies 3 to 124; it reads KKLYIKTYGC…LPELISKVVR (122 aa). [4Fe-4S] cluster is bound by residues Cys-12, Cys-48, Cys-87, Cys-162, Cys-166, and Cys-169. The Radical SAM core domain occupies 148-380; it reads YPQGASAFIS…QKELSSQQLA (233 aa). The region spanning 383–446 is the TRAM domain; sequence ESCVGSTMKV…SNSLTGEIYT (64 aa).

Belongs to the methylthiotransferase family. MiaB subfamily. In terms of assembly, monomer. Requires [4Fe-4S] cluster as cofactor.

It localises to the cytoplasm. It catalyses the reaction N(6)-dimethylallyladenosine(37) in tRNA + (sulfur carrier)-SH + AH2 + 2 S-adenosyl-L-methionine = 2-methylsulfanyl-N(6)-dimethylallyladenosine(37) in tRNA + (sulfur carrier)-H + 5'-deoxyadenosine + L-methionine + A + S-adenosyl-L-homocysteine + 2 H(+). In terms of biological role, catalyzes the methylthiolation of N6-(dimethylallyl)adenosine (i(6)A), leading to the formation of 2-methylthio-N6-(dimethylallyl)adenosine (ms(2)i(6)A) at position 37 in tRNAs that read codons beginning with uridine. The sequence is that of tRNA-2-methylthio-N(6)-dimethylallyladenosine synthase from Rickettsia canadensis (strain McKiel).